Consider the following 345-residue polypeptide: High mobility group protein 20A (345 aa).

2 disordered regions span residues 1–130 (MEST…PFPE) and 166–206 (QKYQ…EKES). Polar residues-rich tracts occupy residues 22-38 (NNQP…SSQA) and 57-67 (LHQSGEQQLGN). Residues 80 to 94 (ARRGGWNKGRKRKRS) are compositionally biased toward basic residues. The HMG box DNA-binding region spans 101 to 169 (PKAPLTGYVR…RYTKELQKYQ (69 aa)). Basic and acidic residues predominate over residues 112 to 125 (MNERREQLRTERPD). Positions 167–178 (KYQNTDAYQTYS) are enriched in polar residues. Over residues 179 to 189 (RKAKSRQKGRQ) the composition is skewed to basic residues. Residues 227 to 285 (SKAREAELRQLRKSNMEFEERNAALQKHVESMRSAVQRLEAELSQEHERNSLLQQHLQS) adopt a coiled-coil conformation.

Its subcellular location is the nucleus. In terms of biological role, plays a role in neuronal differentiation. This is High mobility group protein 20A (hmg20a) from Xenopus laevis (African clawed frog).